A 388-amino-acid chain; its full sequence is Cuticle-degrading protease (388 aa).

Residues 1 to 18 form the signal peptide; the sequence is MHLSALLTLLPAVLAAPA. Positions 19 to 107 are excised as a propeptide; that stretch reads TIGRRAEPAP…IEKDAVMRIS (89 aa). An Inhibitor I9 domain is found at 41-106; that stretch reads KYIVKFKDDI…FIEKDAVMRI (66 aa). Positions 116–388 constitute a Peptidase S8 domain; it reads PWGLGRISHR…TVNYLAYNGA (273 aa). Intrachain disulfides connect C143–C233 and C288–C360. Active-site charge relay system residues include D148 and H179. N-linked (GlcNAc...) asparagine glycosylation occurs at N296. S334 acts as the Charge relay system in catalysis.

The protein belongs to the peptidase S8 family.

Its subcellular location is the secreted. In terms of biological role, capable of breaching the insect cuticle. The protein is Cuticle-degrading protease (PR1) of Metarhizium anisopliae (Entomophthora anisopliae).